A 315-amino-acid polypeptide reads, in one-letter code: Endolytic peptidoglycan transglycosylase RlpA (315 aa).

An N-terminal signal peptide occupies residues 1-19 (MGLALEKVCFLGVIFLISA). Cys20 is lipidated: N-palmitoyl cysteine. Cys20 carries the S-diacylglycerol cysteine lipid modification. Residues 68-79 (SDSQDSNTKDQP) are compositionally biased toward basic and acidic residues. The tract at residues 68–92 (SDSQDSNTKDQPLDNGMRDSSSIQR) is disordered. The SPOR domain occupies 242–315 (SVSGGKFSLQ…YNQNAVLTRE (74 aa)).

It belongs to the RlpA family.

The protein localises to the cell membrane. Its function is as follows. Lytic transglycosylase with a strong preference for naked glycan strands that lack stem peptides. The polypeptide is Endolytic peptidoglycan transglycosylase RlpA (Helicobacter pylori (strain ATCC 700392 / 26695) (Campylobacter pylori)).